Reading from the N-terminus, the 319-residue chain is Acetyl-coenzyme A carboxylase carboxyl transferase subunit alpha (319 aa).

The region spanning 32–293 (NVDAEVRALR…KAVLLNELDA (262 aa)) is the CoA carboxyltransferase C-terminal domain.

This sequence belongs to the AccA family. Acetyl-CoA carboxylase is a heterohexamer composed of biotin carboxyl carrier protein (AccB), biotin carboxylase (AccC) and two subunits each of ACCase subunit alpha (AccA) and ACCase subunit beta (AccD).

It localises to the cytoplasm. It catalyses the reaction N(6)-carboxybiotinyl-L-lysyl-[protein] + acetyl-CoA = N(6)-biotinyl-L-lysyl-[protein] + malonyl-CoA. It participates in lipid metabolism; malonyl-CoA biosynthesis; malonyl-CoA from acetyl-CoA: step 1/1. Functionally, component of the acetyl coenzyme A carboxylase (ACC) complex. First, biotin carboxylase catalyzes the carboxylation of biotin on its carrier protein (BCCP) and then the CO(2) group is transferred by the carboxyltransferase to acetyl-CoA to form malonyl-CoA. The chain is Acetyl-coenzyme A carboxylase carboxyl transferase subunit alpha from Xanthomonas campestris pv. campestris (strain B100).